We begin with the raw amino-acid sequence, 761 residues long: Coenzyme PQQ synthesis protein F (761 aa).

Histidine 49 lines the Zn(2+) pocket. Glutamate 52 acts as the Proton acceptor in catalysis. 2 residues coordinate Zn(2+): histidine 53 and glutamate 130.

The protein belongs to the peptidase M16 family. The cofactor is Zn(2+).

Its pathway is cofactor biosynthesis; pyrroloquinoline quinone biosynthesis. Functionally, required for coenzyme pyrroloquinoline quinone (PQQ) biosynthesis. It is thought that this protein is a protease that cleaves peptides bond in a small peptide (gene pqqA), providing the glutamate and tyrosine residues which are necessary for the synthesis of PQQ. The protein is Coenzyme PQQ synthesis protein F (pqqF) of Klebsiella pneumoniae.